A 1907-amino-acid polypeptide reads, in one-letter code: Receptor-type tyrosine-protein phosphatase S (1907 aa).

The signal sequence occupies residues 1–29; that stretch reads MAPTWRPSVVSVVGPVGLFLVLLARGCLA. Topologically, residues 30 to 1257 are extracellular; that stretch reads EEPPRFIREP…PQPIVDGEEG (1228 aa). 3 consecutive Ig-like C2-type domains span residues 33–123, 135–224, and 232–314; these read PRFI…AKLT, PNID…ANLY, and PRFS…AQIT. 2 cysteine pairs are disulfide-bonded: C54-C107 and C156-C207. Residues 68–72 form an important for binding to glycosaminoglycan chains region; the sequence is KKGKK. N250 and N295 each carry an N-linked (GlcNAc...) asparagine glycan. The cysteines at positions 253 and 298 are disulfide-linked. 8 Fibronectin type-III domains span residues 321 to 411, 416 to 510, 514 to 603, 608 to 705, 710 to 809, 810 to 906, 907 to 1008, and 1011 to 1095; these read APGT…TGEQ, APRN…TQQG, QPMN…TLQA, PPQD…TDED, PPRK…TKGA, VLGR…APRG, FPQI…LARD, and SPKN…TAFN. The segment covering 691–700 has biased composition (low complexity); sequence PGPESSPVVV. The segment at 691–711 is disordered; the sequence is PGPESSPVVVRTDEDVPSAPP. Residue N720 is glycosylated (N-linked (GlcNAc...) asparagine). The N-linked (GlcNAc...) asparagine glycan is linked to N916. The helical transmembrane segment at 1258–1278 threads the bilayer; that stretch reads LIWVIGPVLAVVFIICIVIAI. At 1279–1907 the chain is on the cytoplasmic side; the sequence is LLYKNKPDSK…YLGSFDHYAT (629 aa). Positions 1286–1296 are enriched in basic and acidic residues; sequence DSKRKDSEPRT. Residues 1286–1313 form a disordered region; the sequence is DSKRKDSEPRTKCLLNNADLAPHHPKDP. Tyrosine-protein phosphatase domains follow at residues 1352–1607 and 1639–1898; these read LSQE…LLEA and MELE…ALEY. Residues D1516, 1548–1554, and Q1592 contribute to the substrate site; that span reads CSAGVGR. The active-site Phosphocysteine intermediate is C1548. Residue C1839 is the Phosphocysteine intermediate of the active site.

Belongs to the protein-tyrosine phosphatase family. Receptor class 2A subfamily. As to quaternary structure, binding to large heparan sulfate proteoglycan structures promotes oligomerization. Binding to chondroitin sulfate proteoglycan does not lead to oligomerization. Interacts (via Ig-like domains) with NTRK1 and NTRK3, but does not form detectable complexes with NTRK2. Interacts with PPFIA1, PPFIA2 and PPFIA3. Post-translationally, a cleavage occurs, separating the extracellular domain from the transmembrane segment. This process called 'ectodomain shedding' is thought to be involved in receptor desensitization, signal transduction and/or membrane localization. In terms of tissue distribution, detected in brain neocortex (at protein level). Detected in heart, testis and liver. Detected at lower levels in skeletal muscle, brain, spleen and kidney.

The protein resides in the cell membrane. It is found in the cell projection. It localises to the axon. Its subcellular location is the perikaryon. The protein localises to the cytoplasmic vesicle. The protein resides in the secretory vesicle. It is found in the synaptic vesicle membrane. It localises to the synapse. Its subcellular location is the synaptosome. The protein localises to the postsynaptic density. The protein resides in the neuron projection. It is found in the growth cone. The enzyme catalyses O-phospho-L-tyrosyl-[protein] + H2O = L-tyrosyl-[protein] + phosphate. Functionally, cell surface receptor that binds to glycosaminoglycans, including chondroitin sulfate proteoglycans and heparan sulfate proteoglycans. Binding to chondroitin sulfate and heparan sulfate proteoglycans has opposite effects on PTPRS oligomerization and regulation of neurite outgrowth. Contributes to the inhibition of neurite and axonal outgrowth by chondroitin sulfate proteoglycans, also after nerve transection. Plays a role in stimulating neurite outgrowth in response to the heparan sulfate proteoglycan GPC2. Required for normal brain development, especially for normal development of the pituitary gland and the olfactory bulb. Functions as tyrosine phosphatase. Mediates dephosphorylation of NTRK1, NTRK2 and NTRK3. Plays a role in down-regulation of signaling cascades that lead to the activation of Akt and MAP kinases. Down-regulates TLR9-mediated activation of NF-kappa-B, as well as production of TNF, interferon alpha and interferon beta. The polypeptide is Receptor-type tyrosine-protein phosphatase S (Ptprs) (Rattus norvegicus (Rat)).